Here is a 311-residue protein sequence, read N- to C-terminus: Aspartate carbamoyltransferase catalytic subunit (311 aa).

Carbamoyl phosphate contacts are provided by R55 and T56. L-aspartate is bound at residue K85. Positions 106, 135, and 138 each coordinate carbamoyl phosphate. R168 and R230 together coordinate L-aspartate. Carbamoyl phosphate is bound by residues L268 and P269.

Belongs to the aspartate/ornithine carbamoyltransferase superfamily. ATCase family. In terms of assembly, heterododecamer (2C3:3R2) of six catalytic PyrB chains organized as two trimers (C3), and six regulatory PyrI chains organized as three dimers (R2).

The catalysed reaction is carbamoyl phosphate + L-aspartate = N-carbamoyl-L-aspartate + phosphate + H(+). It participates in pyrimidine metabolism; UMP biosynthesis via de novo pathway; (S)-dihydroorotate from bicarbonate: step 2/3. Functionally, catalyzes the condensation of carbamoyl phosphate and aspartate to form carbamoyl aspartate and inorganic phosphate, the committed step in the de novo pyrimidine nucleotide biosynthesis pathway. This is Aspartate carbamoyltransferase catalytic subunit from Proteus mirabilis (strain HI4320).